The chain runs to 133 residues: MDVSRLLLATLLVCLCFLTAYSHLAPEEKPRDERNLKNNSSMNLLDFPSVSIVALNKKSKKISRNEAEKKKRPSKRKAPMKNVARTRPPPPTPCVATRDSCKPPAPACCDPCAFCQCRFFRSACSCRVLNPTC.

An N-terminal signal peptide occupies residues 1-22 (MDVSRLLLATLLVCLCFLTAYS). An N-linked (GlcNAc...) asparagine glycan is attached at N39. The segment at 56 to 95 (NKKSKKISRNEAEKKKRPSKRKAPMKNVARTRPPPPTPCV) is disordered. Basic residues predominate over residues 70–79 (KKRPSKRKAP). 5 disulfides stabilise this stretch: C94-C109, C101-C115, C108-C126, C112-C133, and C117-C124. One can recognise an Agouti domain in the interval 94–133 (CVATRDSCKPPAPACCDPCAFCQCRFFRSACSCRVLNPTC).

Its subcellular location is the secreted. Functionally, involved in the regulation of melanogenesis. The binding of ASP to MC1R precludes alpha-MSH initiated signaling and thus blocks production of cAMP, leading to a down-regulation of eumelanogenesis (brown/black pigment) and thus increasing synthesis of pheomelanin (yellow/red pigment). The sequence is that of Agouti-signaling protein (ASIP) from Bos taurus (Bovine).